Reading from the N-terminus, the 1438-residue chain is DNA polymerase III PolC-type (1438 aa).

The Exonuclease domain occupies 422–578; the sequence is YVVFDVETTG…YDTESTAYIF (157 aa).

Belongs to the DNA polymerase type-C family. PolC subfamily.

The protein localises to the cytoplasm. The enzyme catalyses DNA(n) + a 2'-deoxyribonucleoside 5'-triphosphate = DNA(n+1) + diphosphate. Required for replicative DNA synthesis. This DNA polymerase also exhibits 3' to 5' exonuclease activity. This Staphylococcus haemolyticus (strain JCSC1435) protein is DNA polymerase III PolC-type.